Reading from the N-terminus, the 512-residue chain is Centrosomal protein CCDC61 (512 aa).

At Met-1 the chain carries N-acetylmethionine. The head domain stretch occupies residues 1–143; sequence MDQPAGLQVD…PLPLPYQGKP (143 aa). Coiled coils occupy residues 178 to 205 and 248 to 275; these read IWHL…SREE and CRRL…LTSE. The segment at 276 to 477 is disordered; sequence LALYKRGRRT…KSLANSGGWV (202 aa). Thr-285 is subject to Phosphothreonine. Positions 293–306 are enriched in basic and acidic residues; sequence TREDRASSSRERSA. 4 positions are modified to phosphoserine: Ser-334, Ser-336, Ser-373, and Ser-376. Low complexity predominate over residues 407 to 425; sequence RSSSVDSFRSRCSSASSCS. Ser-447 and Ser-473 each carry phosphoserine.

Belongs to the CCDC61 family. As to quaternary structure, forms homodimers (via head domain). Interacts with CEP170. Interacts with PCM1 and CEP131. Binds tubulin.

The protein resides in the cytoplasm. It localises to the cytoskeleton. It is found in the microtubule organizing center. Its subcellular location is the centrosome. The protein localises to the centriolar satellite. The protein resides in the cilium basal body. In terms of biological role, microtubule-binding centrosomal protein required for centriole cohesion, independently of the centrosome-associated protein/CEP250 and rootletin/CROCC linker. In interphase, required for anchoring microtubule at the mother centriole subdistal appendages and for centrosome positioning. During mitosis, may be involved in spindle assembly and chromatin alignment by regulating the organization of spindle microtubules into a symmetrical structure. Has been proposed to play a role in CEP170 recruitment to centrosomes. However, this function could not be confirmed. Plays a non-essential role in ciliogenesis. This is Centrosomal protein CCDC61 from Homo sapiens (Human).